A 577-amino-acid chain; its full sequence is Glycine--tRNA ligase (577 aa).

2 residues coordinate substrate: arginine 98 and glutamate 164. ATP is bound by residues 196–198, 206–211, 328–329, and 451–454; these read RNE, IRLREF, EC, and GIDR. Position 211–215 (211–215) interacts with substrate; that stretch reads FTQAE. 447-451 lines the substrate pocket; the sequence is EPSYG.

It belongs to the class-II aminoacyl-tRNA synthetase family.

The protein localises to the cytoplasm. The catalysed reaction is tRNA(Gly) + glycine + ATP = glycyl-tRNA(Gly) + AMP + diphosphate. Its function is as follows. Catalyzes the attachment of glycine to tRNA(Gly). This is Glycine--tRNA ligase from Methanocaldococcus jannaschii (strain ATCC 43067 / DSM 2661 / JAL-1 / JCM 10045 / NBRC 100440) (Methanococcus jannaschii).